The sequence spans 212 residues: Peptide methionine sulfoxide reductase MsrA (212 aa).

Residue C52 is part of the active site.

It belongs to the MsrA Met sulfoxide reductase family.

It carries out the reaction L-methionyl-[protein] + [thioredoxin]-disulfide + H2O = L-methionyl-(S)-S-oxide-[protein] + [thioredoxin]-dithiol. It catalyses the reaction [thioredoxin]-disulfide + L-methionine + H2O = L-methionine (S)-S-oxide + [thioredoxin]-dithiol. Functionally, has an important function as a repair enzyme for proteins that have been inactivated by oxidation. Catalyzes the reversible oxidation-reduction of methionine sulfoxide in proteins to methionine. The sequence is that of Peptide methionine sulfoxide reductase MsrA from Escherichia coli O17:K52:H18 (strain UMN026 / ExPEC).